The following is a 729-amino-acid chain: Phosphoribosylformylglycinamidine synthase subunit PurL (729 aa).

His-54 is an active-site residue. The ATP site is built by Tyr-57 and Lys-96. Residue Glu-98 participates in Mg(2+) binding. Substrate is bound by residues 99–102 (SHNH) and Arg-121. Residue His-100 is the Proton acceptor of the active site. Residue Asp-122 coordinates Mg(2+). Gln-245 is a substrate binding site. Asp-273 provides a ligand contact to Mg(2+). Residue 317–319 (ETQ) participates in substrate binding. ATP-binding residues include Asp-495 and Gly-532. A Mg(2+)-binding site is contributed by Asn-533. Ser-535 contributes to the substrate binding site.

Belongs to the FGAMS family. As to quaternary structure, monomer. Part of the FGAM synthase complex composed of 1 PurL, 1 PurQ and 2 PurS subunits.

Its subcellular location is the cytoplasm. The enzyme catalyses N(2)-formyl-N(1)-(5-phospho-beta-D-ribosyl)glycinamide + L-glutamine + ATP + H2O = 2-formamido-N(1)-(5-O-phospho-beta-D-ribosyl)acetamidine + L-glutamate + ADP + phosphate + H(+). It functions in the pathway purine metabolism; IMP biosynthesis via de novo pathway; 5-amino-1-(5-phospho-D-ribosyl)imidazole from N(2)-formyl-N(1)-(5-phospho-D-ribosyl)glycinamide: step 1/2. Part of the phosphoribosylformylglycinamidine synthase complex involved in the purines biosynthetic pathway. Catalyzes the ATP-dependent conversion of formylglycinamide ribonucleotide (FGAR) and glutamine to yield formylglycinamidine ribonucleotide (FGAM) and glutamate. The FGAM synthase complex is composed of three subunits. PurQ produces an ammonia molecule by converting glutamine to glutamate. PurL transfers the ammonia molecule to FGAR to form FGAM in an ATP-dependent manner. PurS interacts with PurQ and PurL and is thought to assist in the transfer of the ammonia molecule from PurQ to PurL. This chain is Phosphoribosylformylglycinamidine synthase subunit PurL, found in Staphylococcus aureus (strain bovine RF122 / ET3-1).